The chain runs to 224 residues: Ribose-5-phosphate isomerase A (224 aa).

Residues 32 to 35 (TGST), 85 to 88 (DGAD), and 98 to 101 (KGGG) contribute to the substrate site. E107 serves as the catalytic Proton acceptor. K125 contacts substrate.

This sequence belongs to the ribose 5-phosphate isomerase family. Homodimer.

It carries out the reaction aldehydo-D-ribose 5-phosphate = D-ribulose 5-phosphate. It functions in the pathway carbohydrate degradation; pentose phosphate pathway; D-ribose 5-phosphate from D-ribulose 5-phosphate (non-oxidative stage): step 1/1. In terms of biological role, catalyzes the reversible conversion of ribose-5-phosphate to ribulose 5-phosphate. This chain is Ribose-5-phosphate isomerase A, found in Pseudomonas putida (strain GB-1).